The sequence spans 298 residues: Ribosomal RNA small subunit methyltransferase H (298 aa).

Residues 46–48 (GGH), Asp-65, Phe-92, Asp-108, and His-115 each bind S-adenosyl-L-methionine.

Belongs to the methyltransferase superfamily. RsmH family.

It localises to the cytoplasm. It catalyses the reaction cytidine(1402) in 16S rRNA + S-adenosyl-L-methionine = N(4)-methylcytidine(1402) in 16S rRNA + S-adenosyl-L-homocysteine + H(+). Functionally, specifically methylates the N4 position of cytidine in position 1402 (C1402) of 16S rRNA. The chain is Ribosomal RNA small subunit methyltransferase H from Nostoc punctiforme (strain ATCC 29133 / PCC 73102).